We begin with the raw amino-acid sequence, 155 residues long: UPF0178 protein mlr0875 (155 aa).

The protein belongs to the UPF0178 family.

This chain is UPF0178 protein mlr0875, found in Mesorhizobium japonicum (strain LMG 29417 / CECT 9101 / MAFF 303099) (Mesorhizobium loti (strain MAFF 303099)).